The primary structure comprises 73 residues: Acyl carrier protein homolog (73 aa).

The 72-residue stretch at 1 to 72 (MAIKEWIITQ…DIIVLIEQKS (72 aa)) folds into the Carrier domain. The residue at position 32 (S32) is an O-(pantetheine 4'-phosphoryl)serine.

Post-translationally, 4'-phosphopantetheine is transferred from CoA to a specific serine of the apo-ACP-like protein.

Its pathway is lipid metabolism; fatty acid biosynthesis. In terms of biological role, carrier of the growing fatty acid chain in fatty acid biosynthesis. The chain is Acyl carrier protein homolog from Mycoplasmopsis pulmonis (strain UAB CTIP) (Mycoplasma pulmonis).